Here is a 156-residue protein sequence, read N- to C-terminus: Transcriptional repressor NrdR (156 aa).

The segment at 3–34 (CPKCSSTHSRVVDSRHADDANAIRRRRECENC) is a zinc-finger region. Residues 49–139 (LIVVKKDGTR…VYKEFKDVDQ (91 aa)) form the ATP-cone domain.

This sequence belongs to the NrdR family. It depends on Zn(2+) as a cofactor.

In terms of biological role, negatively regulates transcription of bacterial ribonucleotide reductase nrd genes and operons by binding to NrdR-boxes. The polypeptide is Transcriptional repressor NrdR (Staphylococcus haemolyticus (strain JCSC1435)).